The sequence spans 387 residues: MTVLKMTDLDLKGKRVLIREDLNVPVKDGQVQSDARIKAALPTIRLALEKGAAVMVCSHLGRPSEGEFSAENSLKPVAEYLSKALGREVPLLADYLDGVEVKAGDLVLFENVRFNKGEKKNADELAQKYAALCDVFVMDAFGTAHRAEGSTHGVARFAKVAAAGPLLAAELDALGKALGNPARPMAAIVAGSKVSTKLDVLNSLAGICDQLIVGGGIANTFLAAAGHKVGKSLYEADLVETAKAIAAKVKVPLPVDVVVAKEFAESAVATVKAIAEVADDDMILDIGPQTAAQFADLLKTSKTILWNGPVGVFEFDQFGEGTRTLANAIADSAAFSIAGGGDTLAAIDKYGIAERISYISTGGGAFLEFVEGKVLPAVEILEQRAKG.

Substrate contacts are provided by residues 21-23, Arg36, 59-62, Arg113, and Arg146; these read DLN and HLGR. Residues Lys197, Glu314, and 340–343 each bind ATP; that span reads GGDT.

The protein belongs to the phosphoglycerate kinase family. Monomer.

It localises to the cytoplasm. The catalysed reaction is (2R)-3-phosphoglycerate + ATP = (2R)-3-phospho-glyceroyl phosphate + ADP. It participates in carbohydrate degradation; glycolysis; pyruvate from D-glyceraldehyde 3-phosphate: step 2/5. The sequence is that of Phosphoglycerate kinase from Pseudomonas paraeruginosa (strain DSM 24068 / PA7) (Pseudomonas aeruginosa (strain PA7)).